The chain runs to 114 residues: Hydrogenase maturation factor HypA (114 aa).

Residue histidine 2 coordinates Ni(2+). Residues cysteine 70, cysteine 73, cysteine 86, and cysteine 89 each coordinate Zn(2+).

Belongs to the HypA/HybF family.

Its function is as follows. Involved in the maturation of [NiFe] hydrogenases. Required for nickel insertion into the metal center of the hydrogenase. The sequence is that of Hydrogenase maturation factor HypA from Rippkaea orientalis (strain PCC 8801 / RF-1) (Cyanothece sp. (strain PCC 8801)).